A 185-amino-acid polypeptide reads, in one-letter code: MISVNDFRTGLTISVDNALWQVLDFQHVKPGKGAAFVRSKLRNLRTGSVQEKTFRAGEKVEKAHIENRRMQYLYASGEAHVFMDNGTYEQIELGEKQIERELKFLKENMEVAIMTYQGEVLGVELPNTVELQVTETEPGIKGDTASNVTKPATLETGLVVQVPIFINEGEMLIINTGEGKYVSRA.

Belongs to the elongation factor P family.

The protein resides in the cytoplasm. The protein operates within protein biosynthesis; polypeptide chain elongation. Involved in peptide bond synthesis. Stimulates efficient translation and peptide-bond synthesis on native or reconstituted 70S ribosomes in vitro. Probably functions indirectly by altering the affinity of the ribosome for aminoacyl-tRNA, thus increasing their reactivity as acceptors for peptidyl transferase. This chain is Elongation factor P, found in Bacillus cereus (strain B4264).